We begin with the raw amino-acid sequence, 256 residues long: UPF0246 protein HRM2_41860 (256 aa).

It belongs to the UPF0246 family.

The protein is UPF0246 protein HRM2_41860 of Desulforapulum autotrophicum (strain ATCC 43914 / DSM 3382 / VKM B-1955 / HRM2) (Desulfobacterium autotrophicum).